Here is a 152-residue protein sequence, read N- to C-terminus: MSSKLEQLQALLAPVVEALGYECWGVEFISQGRHSVLRVYIDRPEGILIDDCEAVSRQVSGILDVEDPISGEYTLEVSSPGMDRPLFTLEQFAKHAGEQVKIRLRSPYEGRRNYQGILRGVEEQDVVVLVDDHEYLLPIDSIDKANIIPRFD.

The protein belongs to the RimP family.

The protein localises to the cytoplasm. Its function is as follows. Required for maturation of 30S ribosomal subunits. In Pseudomonas aeruginosa (strain LESB58), this protein is Ribosome maturation factor RimP.